Reading from the N-terminus, the 289-residue chain is Energy-coupling factor transporter ATP-binding protein EcfA2 (289 aa).

Positions 3–246 (IQAKKLNYTY…PEWLKNHHLN (244 aa)) constitute an ABC transporter domain. 40–47 (GHTGSGKS) provides a ligand contact to ATP.

Belongs to the ABC transporter superfamily. Energy-coupling factor EcfA family. As to quaternary structure, forms a stable energy-coupling factor (ECF) transporter complex composed of 2 membrane-embedded substrate-binding proteins (S component), 2 ATP-binding proteins (A component) and 2 transmembrane proteins (T component).

Its subcellular location is the cell membrane. In terms of biological role, ATP-binding (A) component of a common energy-coupling factor (ECF) ABC-transporter complex. Unlike classic ABC transporters this ECF transporter provides the energy necessary to transport a number of different substrates. The chain is Energy-coupling factor transporter ATP-binding protein EcfA2 from Ligilactobacillus salivarius (strain UCC118) (Lactobacillus salivarius).